The following is a 505-amino-acid chain: SusD-like protein P2 (505 aa).

A signal peptide spans 1–17; it reads MKKYKITFIVLLLTLVG. C18 carries N-palmitoyl cysteine lipidation. The S-diacylglycerol cysteine moiety is linked to residue C18.

This sequence belongs to the SusD family.

The protein localises to the cell outer membrane. Polysaccharide-binding protein probably involved in ulvan degradation. Ulvan is the main polysaccharide component of the Ulvales (green seaweed) cell wall. It is composed of disaccharide building blocks comprising 3-sulfated rhamnose (Rha3S) linked to D-glucuronic acid (GlcA), L-iduronic acid (IduA), or D-xylose (Xyl). The SusD-like protein may mediate ulvan oligomer-binding before transport in the periplasm for further degradation. In Formosa agariphila (strain DSM 15362 / KCTC 12365 / LMG 23005 / KMM 3901 / M-2Alg 35-1), this protein is SusD-like protein P2.